The following is a 190-amino-acid chain: Protein soem-1 (190 aa).

In terms of domain architecture, SH2 spans 96–190 (YMEQNMNRVE…LVLKNQLKPV (95 aa)).

In terms of assembly, interacts with abl-1. Expressed in PQR, but not AQR, Q neuroblast descendents.

Its function is as follows. Functions downstream of migratory protein mig-13 and may play a role in the control of Q neuroblast migration during larval development. The protein is Protein soem-1 of Caenorhabditis elegans.